A 287-amino-acid polypeptide reads, in one-letter code: Agamous-like MADS-box protein AGL53 (287 aa).

An MADS-box domain is found at 30 to 78 (STAKKTTNLSMREQTMFKKALELSTLCNIDVCVIYYGRDGKLIKTWPED). The disordered stretch occupies residues 151–171 (EFGQTRAVSSTTNPLSPPPSL).

As to quaternary structure, interacts with MEE14/CBP1.

It localises to the nucleus. Probable transcription factor that may function in the maintenance of the proper function of the central cell in pollen tube attraction. The sequence is that of Agamous-like MADS-box protein AGL53 from Arabidopsis thaliana (Mouse-ear cress).